We begin with the raw amino-acid sequence, 291 residues long: Nucleotide-binding protein Athe_0320 (291 aa).

9-16 (GMSGAGKS) is a binding site for ATP. A GTP-binding site is contributed by 60–63 (DIRG).

The protein belongs to the RapZ-like family.

Displays ATPase and GTPase activities. This is Nucleotide-binding protein Athe_0320 from Caldicellulosiruptor bescii (strain ATCC BAA-1888 / DSM 6725 / KCTC 15123 / Z-1320) (Anaerocellum thermophilum).